A 1059-amino-acid chain; its full sequence is Protein OPAQUE10 (1059 aa).

Tandem repeats lie at residues Ser-269–Cys-342, Ser-343–Cys-416, Ser-417–Cys-490, Ser-491–Cys-564, Phe-565–Cys-638, Ser-639–Cys-712, and Ser-713–Cys-786. Residues Ser-269–Cys-786 form a 7 X approximate repeats region. The disordered stretch occupies residues Phe-511–Ser-534. Over residues Pro-515–Ser-534 the composition is skewed to basic and acidic residues. Disordered stretches follow at residues Gln-732 to Ser-756, Glu-856 to Thr-875, and Ser-889 to Gly-998. A compositionally biased stretch (basic and acidic residues) spans Leu-858–Leu-869. Composition is skewed to polar residues over residues Asp-907 to Gly-924 and Ala-945 to Ser-958. The span at Thr-984–Arg-994 shows a compositional bias: basic and acidic residues. A helical membrane pass occupies residues Val-1003–Leu-1023.

In terms of assembly, homodimer. Interacts (via N-terminus) with FL1 (via C-terminus), HIP, 19 kDa alpha-zein (AC P06677), 22 kDa alpha-zein (AC O48966), 16 kDa gamma-zein (AC P08031) and 50 kDa gamma-zein (AC C0P381). In terms of tissue distribution, expressed in kernels.

It is found in the endoplasmic reticulum membrane. In terms of biological role, cereal endosperm protein required for the ring-shaped distribution of 22 kDa alpha- and 16 kDa gamma-zeins in protein bodies. The protein is Protein OPAQUE10 of Zea mays (Maize).